A 222-amino-acid chain; its full sequence is Large ribosomal subunit protein uL4 (222 aa).

The disordered stretch occupies residues 50–72 (TRGRSEVSHSTRKPFRQKGTGNA).

This sequence belongs to the universal ribosomal protein uL4 family. As to quaternary structure, part of the 50S ribosomal subunit.

Functionally, one of the primary rRNA binding proteins, this protein initially binds near the 5'-end of the 23S rRNA. It is important during the early stages of 50S assembly. It makes multiple contacts with different domains of the 23S rRNA in the assembled 50S subunit and ribosome. In terms of biological role, forms part of the polypeptide exit tunnel. The protein is Large ribosomal subunit protein uL4 of Chlamydia muridarum (strain MoPn / Nigg).